A 130-amino-acid polypeptide reads, in one-letter code: Small ribosomal subunit protein uS9 (130 aa).

This sequence belongs to the universal ribosomal protein uS9 family.

This chain is Small ribosomal subunit protein uS9, found in Bacillus velezensis (strain DSM 23117 / BGSC 10A6 / LMG 26770 / FZB42) (Bacillus amyloliquefaciens subsp. plantarum).